The sequence spans 139 residues: MTRILATGTFDLLHPGHIYFLTQARALGDELFVIVARDSNVTHKPKPIVSEEQRLEMVNALGIVDKALLGSEKDMFEPLKHIRPDIIALGYDQRFNAENLEEELAKRGLPANVVRIPLSKECPLCSTGAIIKEVLKRYG.

ATP contacts are provided by residues 9–10 (TF), 14–17 (HPGH), and aspartate 92.

The protein belongs to the archaeal FAD synthase family. Homodimer. The cofactor is a divalent metal cation.

It carries out the reaction FMN + ATP + H(+) = FAD + diphosphate. It participates in cofactor biosynthesis; FAD biosynthesis; FAD from FMN: step 1/1. Its function is as follows. Catalyzes the transfer of the AMP portion of ATP to flavin mononucleotide (FMN) to produce flavin adenine dinucleotide (FAD) coenzyme. The chain is FAD synthase from Methanosarcina barkeri (strain Fusaro / DSM 804).